A 152-amino-acid polypeptide reads, in one-letter code: SsrA-binding protein (152 aa).

Over residues 132-142 the composition is skewed to basic and acidic residues; it reads REAIKKRDVSD. The interval 132-152 is disordered; the sequence is REAIKKRDVSDQIRSSLRRSR.

Belongs to the SmpB family.

The protein resides in the cytoplasm. Required for rescue of stalled ribosomes mediated by trans-translation. Binds to transfer-messenger RNA (tmRNA), required for stable association of tmRNA with ribosomes. tmRNA and SmpB together mimic tRNA shape, replacing the anticodon stem-loop with SmpB. tmRNA is encoded by the ssrA gene; the 2 termini fold to resemble tRNA(Ala) and it encodes a 'tag peptide', a short internal open reading frame. During trans-translation Ala-aminoacylated tmRNA acts like a tRNA, entering the A-site of stalled ribosomes, displacing the stalled mRNA. The ribosome then switches to translate the ORF on the tmRNA; the nascent peptide is terminated with the 'tag peptide' encoded by the tmRNA and targeted for degradation. The ribosome is freed to recommence translation, which seems to be the essential function of trans-translation. This is SsrA-binding protein from Bdellovibrio bacteriovorus (strain ATCC 15356 / DSM 50701 / NCIMB 9529 / HD100).